The following is a 256-amino-acid chain: Trypsin alpha (256 aa).

The signal sequence occupies residues M1–G22. A propeptide spans L23–R30 (activation peptide). Residues I31–N254 enclose the Peptidase S1 domain. C56 and C72 are oxidised to a cystine. Residues H71 and D116 each act as charge relay system in the active site. 2 disulfides stabilise this stretch: C180–C197 and C206–C230. The active-site Charge relay system is S210.

This sequence belongs to the peptidase S1 family.

It localises to the secreted. It is found in the extracellular space. It catalyses the reaction Preferential cleavage: Arg-|-Xaa, Lys-|-Xaa.. This chain is Trypsin alpha (alphaTry), found in Drosophila erecta (Fruit fly).